A 555-amino-acid chain; its full sequence is Inositol 1,4,5-trisphosphate receptor-interacting protein-like 1 (555 aa).

The N-terminal stretch at 1–24 (MNVDAEASMAVISLLFLAVMYVVH) is a signal peptide. Residues 25 to 103 (HPLMVSDRMD…WPFQADGQEG (79 aa)) are Extracellular-facing. Positions 38–74 (LARSRQLEKRMSEEMRLLEMEFEERKRAAEQRQKAEN) form a coiled coil. A helical membrane pass occupies residues 104–124 (PLGWMLGNLWNTGLFCLFLVF). Residues 125–555 (ELLRQNMQHE…LPHAPLAAAP (431 aa)) lie on the Cytoplasmic side of the membrane.

Belongs to the ITPRIP family. As to expression, expressed in testis and tumoral cells.

Its subcellular location is the cell membrane. Its function is as follows. Functions as a ligand of CD3E, inhibiting TCR-CD3 complex signaling to regulate T cell activation. Induces stable CD3E-NCK1 binding, thereby preventing the CD3E-ZAP70 interaction and subsequently inhibiting the activation of the downstream ERK-NFkB signaling cascade and calcium influx. This Homo sapiens (Human) protein is Inositol 1,4,5-trisphosphate receptor-interacting protein-like 1.